A 218-amino-acid polypeptide reads, in one-letter code: Autophagy-related protein 101 (218 aa).

Positions 152–156 (IINIV) are important for interaction with ATG13.

Belongs to the ATG101 family. As to quaternary structure, interacts with ATG13. Associates with a complex composed of ATG13, ULK1 and RB1CC1; the association with this complex requires the presence of ATG13.

Its subcellular location is the cytoplasm. The protein localises to the preautophagosomal structure. In terms of biological role, autophagy factor required for autophagosome formation. Stabilizes ATG13, protecting it from proteasomal degradation. This chain is Autophagy-related protein 101 (Atg101), found in Mus musculus (Mouse).